Reading from the N-terminus, the 206-residue chain is Large ribosomal subunit protein mL40 (206 aa).

The N-terminal 46 residues, 1-46 (MATAAMLCAARALRPRSWIPGTCQAQVRHTHQRASLLSFWELIPMR), are a transit peptide targeting the mitochondrion. The segment at 170-190 (PFEKEGPHYTPPVPNYQAPEG) is disordered.

It belongs to the mitochondrion-specific ribosomal protein mL40 family. As to quaternary structure, component of the mitochondrial ribosome large subunit (39S) which comprises a 16S rRNA and about 50 distinct proteins.

The protein resides in the mitochondrion. This is Large ribosomal subunit protein mL40 (Mrpl40) from Rattus norvegicus (Rat).